Here is a 1406-residue protein sequence, read N- to C-terminus: Ubiquitin carboxyl-terminal hydrolase 6 (1406 aa).

In terms of domain architecture, Rab-GAP TBC spans 100–292 (GIPMNIRGPV…RLWDVYLVEG (193 aa)). Residues 348–380 (KLTRKQGDLPPPAKREQGSLAPRPVPASRGGKT) are disordered. One can recognise a USP domain in the interval 532 to 1369 (TGLSNLGNTC…SAYILFYEQQ (838 aa)). Residue Cys-541 is the Nucleophile of the active site. Residues 1120-1231 (HKPLTPQGDE…KKNLDASKEN (112 aa)) are disordered. The span at 1129 to 1155 (ELSKPRILAREVKKVDAQSSAGKEDML) shows a compositional bias: basic and acidic residues. Positions 1156–1197 (LSKSPSSLSANISSSPKGSPSSSRKSGTSCPSSKNSSPNSSP) are enriched in low complexity. His-1328 serves as the catalytic Proton acceptor. The tract at residues 1384–1406 (KMADTSSTDEDSESDYEKYSMLQ) is disordered.

This sequence belongs to the peptidase C19 family. In terms of assembly, interacts with RAC1 and CDC42. Interacts (via Rab-GAP TBC domain) with ARF6. Interacts with calmodulin (CALM1, CALM2 and/or CALM3); the interaction is calcium-dependent. Monubiquitinated; ubiquitination is calmodulin and calcium dependent. As to expression, testis specific. Expressed in various cancer cell lines.

The protein localises to the cell membrane. The protein resides in the cytoplasm. Its subcellular location is the endosome. It carries out the reaction Thiol-dependent hydrolysis of ester, thioester, amide, peptide and isopeptide bonds formed by the C-terminal Gly of ubiquitin (a 76-residue protein attached to proteins as an intracellular targeting signal).. In terms of biological role, deubiquitinase with an ATP-independent isopeptidase activity, cleaving at the C-terminus of the ubiquitin moiety. Catalyzes its own deubiquitination. In vitro, isoform 2, but not isoform 3, shows deubiquitinating activity. Promotes plasma membrane localization of ARF6 and selectively regulates ARF6-dependent endocytic protein trafficking. Is able to initiate tumorigenesis by inducing the production of matrix metalloproteinases following NF-kappa-B activation. May act as a GTPase-activating protein for RAB3A. This Homo sapiens (Human) protein is Ubiquitin carboxyl-terminal hydrolase 6 (USP6).